A 418-amino-acid polypeptide reads, in one-letter code: Protein fuzzy homolog (418 aa).

It belongs to the fuzzy family. In terms of assembly, component of the CPLANE (ciliogenesis and planar polarity effectors) complex, composed of INTU, FUZ and WDPCP. Interacts with CPLANE2. Interacts with CPLANE1.

The protein localises to the cytoplasm. The protein resides in the cytoskeleton. Its subcellular location is the cilium basal body. Functionally, probable planar cell polarity effector involved in cilium biogenesis. May regulate protein and membrane transport to the cilium. Proposed to function as core component of the CPLANE (ciliogenesis and planar polarity effectors) complex involved in the recruitment of peripheral IFT-A proteins to basal bodies. May regulate the morphogenesis of hair follicles which depends on functional primary cilia. Binds phosphatidylinositol 3-phosphate with highest affinity, followed by phosphatidylinositol 4-phosphate and phosphatidylinositol 5-phosphate. The protein is Protein fuzzy homolog (FUZ) of Homo sapiens (Human).